Here is a 289-residue protein sequence, read N- to C-terminus: MDNKIIYLTELDSSVDKSEPFVMGIDEAGRGPVMGPMVYGCCYAPISKSTTLKSMKFNDSKKLTEQQRDQLFDKMGESNKILAYETDVITAEILSEKMLYKKPISLNVISHESAIGLIRSVLKKGVNVQELYLDTVGPPDKYQLMLKKLFPEIGKIIVSKKADSLYPIVSAASIAAKVVRDFEITNKNFDYLNIYDQDEQLSTDFGSGYPSDPLSKKWLVKNRDKVFGYPNFIRFSWKTTETAMRGACFGVDWVLENDKLKQHFQENQNDKKRFMFFKENNIENCINDF.

The RNase H type-2 domain maps to 20 to 249 (PFVMGIDEAG…TETAMRGACF (230 aa)). 3 residues coordinate a divalent metal cation: aspartate 26, glutamate 27, and aspartate 134.

This sequence belongs to the RNase HII family. Eukaryotic subfamily. It depends on Mn(2+) as a cofactor. Requires Mg(2+) as cofactor.

The enzyme catalyses Endonucleolytic cleavage to 5'-phosphomonoester.. Its function is as follows. Endonuclease that specifically degrades the RNA of RNA-DNA hybrids. Participates in DNA replication. The sequence is that of Ribonuclease H2 subunit A (rnaseh2A) from Dictyostelium discoideum (Social amoeba).